The chain runs to 202 residues: Indolepyruvate oxidoreductase subunit IorB (202 aa).

In terms of assembly, heterodimer of the IorA and IorB subunits.

It carries out the reaction indole-3-pyruvate + 2 oxidized [2Fe-2S]-[ferredoxin] + CoA = (indol-3-yl)acetyl-CoA + 2 reduced [2Fe-2S]-[ferredoxin] + CO2 + H(+). In terms of biological role, catalyzes the ferredoxin-dependent oxidative decarboxylation of arylpyruvates. The polypeptide is Indolepyruvate oxidoreductase subunit IorB (iorB) (Pyrococcus horikoshii (strain ATCC 700860 / DSM 12428 / JCM 9974 / NBRC 100139 / OT-3)).